The following is a 208-amino-acid chain: Cysteine-rich protein 2 (208 aa).

Residues 5-57 (CPKCDKTVYFAEKVSSLGKDWHRFCLRCEHCSKTLTPGGHAEHDGKPFCHKPC) form the LIM zinc-binding 1 domain. Lys23 is modified (N6-acetyllysine). The disordered stretch occupies residues 98–117 (TEERKASGPPKGPSKASSVT). Ser104 bears the Phosphoserine mark. Over residues 104-115 (SGPPKGPSKASS) the composition is skewed to low complexity. Residues 126–178 (CPRCNKRVYFAEKVTSLGKDWHRPCLRCERCGKTLTPGGHAEHDGQPYCHKPC) enclose the LIM zinc-binding 2 domain. Residues Lys138 and Lys144 each carry the N6-acetyllysine modification.

In terms of assembly, interacts with TGFB1I1.

The sequence is that of Cysteine-rich protein 2 (CRIP2) from Bos taurus (Bovine).